The following is a 454-amino-acid chain: UPF0210 protein BAD_1323 (454 aa).

This sequence belongs to the UPF0210 family. In terms of assembly, homodimer.

This Bifidobacterium adolescentis (strain ATCC 15703 / DSM 20083 / NCTC 11814 / E194a) protein is UPF0210 protein BAD_1323.